The chain runs to 610 residues: Dihydroxy-acid dehydratase (610 aa).

Mg(2+) is bound at residue aspartate 81. Residue cysteine 122 coordinates [2Fe-2S] cluster. The Mg(2+) site is built by aspartate 123 and lysine 124. Lysine 124 bears the N6-carboxylysine mark. A [2Fe-2S] cluster-binding site is contributed by cysteine 193. Position 489 (glutamate 489) interacts with Mg(2+). Catalysis depends on serine 515, which acts as the Proton acceptor.

The protein belongs to the IlvD/Edd family. In terms of assembly, homodimer. [2Fe-2S] cluster is required as a cofactor. The cofactor is Mg(2+).

It carries out the reaction (2R)-2,3-dihydroxy-3-methylbutanoate = 3-methyl-2-oxobutanoate + H2O. It catalyses the reaction (2R,3R)-2,3-dihydroxy-3-methylpentanoate = (S)-3-methyl-2-oxopentanoate + H2O. The protein operates within amino-acid biosynthesis; L-isoleucine biosynthesis; L-isoleucine from 2-oxobutanoate: step 3/4. It participates in amino-acid biosynthesis; L-valine biosynthesis; L-valine from pyruvate: step 3/4. In terms of biological role, functions in the biosynthesis of branched-chain amino acids. Catalyzes the dehydration of (2R,3R)-2,3-dihydroxy-3-methylpentanoate (2,3-dihydroxy-3-methylvalerate) into 2-oxo-3-methylpentanoate (2-oxo-3-methylvalerate) and of (2R)-2,3-dihydroxy-3-methylbutanoate (2,3-dihydroxyisovalerate) into 2-oxo-3-methylbutanoate (2-oxoisovalerate), the penultimate precursor to L-isoleucine and L-valine, respectively. This is Dihydroxy-acid dehydratase from Xylella fastidiosa (strain M23).